Reading from the N-terminus, the 162-residue chain is NADH-quinone oxidoreductase subunit I (162 aa).

2 consecutive 4Fe-4S ferredoxin-type domains span residues 52–82 and 93–122; these read LRRY…IEAG and VRYD…EGPN. C62, C65, C68, C72, C102, C105, C108, and C112 together coordinate [4Fe-4S] cluster.

The protein belongs to the complex I 23 kDa subunit family. NDH-1 is composed of 14 different subunits. Subunits NuoA, H, J, K, L, M, N constitute the membrane sector of the complex. It depends on [4Fe-4S] cluster as a cofactor.

It is found in the cell inner membrane. The enzyme catalyses a quinone + NADH + 5 H(+)(in) = a quinol + NAD(+) + 4 H(+)(out). Functionally, NDH-1 shuttles electrons from NADH, via FMN and iron-sulfur (Fe-S) centers, to quinones in the respiratory chain. The immediate electron acceptor for the enzyme in this species is believed to be ubiquinone. Couples the redox reaction to proton translocation (for every two electrons transferred, four hydrogen ions are translocated across the cytoplasmic membrane), and thus conserves the redox energy in a proton gradient. In Bradyrhizobium sp. (strain BTAi1 / ATCC BAA-1182), this protein is NADH-quinone oxidoreductase subunit I.